The chain runs to 512 residues: PTS system mannitol-specific EIICB component (512 aa).

At 1–28 the chain is on the cytoplasmic side; the sequence is MSQTEEKKGIGRRVQAFGSFLSSMIMPN. The PTS EIIC type-2 domain maps to 17 to 349; that stretch reads FGSFLSSMIM…MKFTREPKQD (333 aa). Residues 29–50 traverse the membrane as a helical segment; that stretch reads IGAFIAWGFIAAIFIDNGWLPN. The Extracellular portion of the chain corresponds to 51 to 54; sequence KDLA. The chain crosses the membrane as a helical span at residues 55-75; that stretch reads TLAGPMITYLIPLLIAFSGGR. At 76-139 the chain is on the cytoplasmic side; sequence LIYDLRGGII…QGFEMLFNNF (64 aa). The chain crosses the membrane as a helical span at residues 140–161; that stretch reads SAGILGFIMTIAGFKILAPLMK. Over 162 to 170 the chain is Extracellular; it reads FIMHILSVA. A helical transmembrane segment spans residues 171-191; the sequence is VEALVHAHLLPLVSILVEPAK. Topologically, residues 192 to 278 are cytoplasmic; sequence IVFLNNAINH…VLMRPLLFIA (87 aa). The chain crosses the membrane as a helical span at residues 279–298; that stretch reads VILGGMTGVATYQATGFGFK. At 299–318 the chain is on the extracellular side; that stretch reads SPASPGSFIVYCLNAPRGEF. Residues 319 to 340 form a helical membrane-spanning segment; it reads LHMLLGVFLAALVSFVVAALIM. Residues 341 to 512 lie on the Cytoplasmic side of the membrane; sequence KFTREPKQDL…LNNLKKDDQA (172 aa). The disordered stretch occupies residues 355–402; sequence AQMENTKGKKSSVASKLVSSDKNVNTEENASGNVSETSSSDDDPEALL. A compositionally biased stretch (low complexity) spans 365–376; it reads SSVASKLVSSDK. A compositionally biased stretch (polar residues) spans 380–392; sequence TEENASGNVSETS. One can recognise a PTS EIIB type-2 domain in the interval 419–512; that stretch reads NHVIFACDAG…LNNLKKDDQA (94 aa). Cys425 acts as the Phosphocysteine intermediate; for EIIB activity in catalysis. Cys425 carries the phosphocysteine; by EIIA modification.

As to quaternary structure, homodimer.

The protein localises to the cell membrane. It carries out the reaction D-mannitol(out) + N(pros)-phospho-L-histidyl-[protein] = D-mannitol 1-phosphate(in) + L-histidyl-[protein]. In terms of biological role, the phosphoenolpyruvate-dependent sugar phosphotransferase system (sugar PTS), a major carbohydrate active transport system, catalyzes the phosphorylation of incoming sugar substrates concomitantly with their translocation across the cell membrane. The enzyme II CmtAB PTS system is involved in D-mannitol transport. This Staphylococcus aureus (strain Mu50 / ATCC 700699) protein is PTS system mannitol-specific EIICB component (mtlA).